Reading from the N-terminus, the 377-residue chain is Acetylornithine aminotransferase (377 aa).

Residues 94 to 95 and phenylalanine 121 contribute to the pyridoxal 5'-phosphate site; that span reads GT. N(2)-acetyl-L-ornithine is bound at residue arginine 124. 206–209 is a binding site for pyridoxal 5'-phosphate; that stretch reads DEIQ. Residue lysine 235 is modified to N6-(pyridoxal phosphate)lysine. A N(2)-acetyl-L-ornithine-binding site is contributed by serine 263. Pyridoxal 5'-phosphate is bound at residue threonine 264.

This sequence belongs to the class-III pyridoxal-phosphate-dependent aminotransferase family. ArgD subfamily. Homodimer. It depends on pyridoxal 5'-phosphate as a cofactor.

It is found in the cytoplasm. The enzyme catalyses N(2)-acetyl-L-ornithine + 2-oxoglutarate = N-acetyl-L-glutamate 5-semialdehyde + L-glutamate. The protein operates within amino-acid biosynthesis; L-arginine biosynthesis; N(2)-acetyl-L-ornithine from L-glutamate: step 4/4. The polypeptide is Acetylornithine aminotransferase (Lactococcus lactis subsp. lactis (strain IL1403) (Streptococcus lactis)).